The chain runs to 177 residues: Large ribosomal subunit protein uL6 (177 aa).

This sequence belongs to the universal ribosomal protein uL6 family. Part of the 50S ribosomal subunit.

In terms of biological role, this protein binds to the 23S rRNA, and is important in its secondary structure. It is located near the subunit interface in the base of the L7/L12 stalk, and near the tRNA binding site of the peptidyltransferase center. This chain is Large ribosomal subunit protein uL6, found in Neisseria meningitidis serogroup B (strain ATCC BAA-335 / MC58).